An 89-amino-acid polypeptide reads, in one-letter code: Small ribosomal subunit protein uS17 (89 aa).

It belongs to the universal ribosomal protein uS17 family. Part of the 30S ribosomal subunit.

In terms of biological role, one of the primary rRNA binding proteins, it binds specifically to the 5'-end of 16S ribosomal RNA. This chain is Small ribosomal subunit protein uS17, found in Leptospira interrogans serogroup Icterohaemorrhagiae serovar Lai (strain 56601).